The sequence spans 189 residues: Elongation factor P-like protein (189 aa).

This sequence belongs to the elongation factor P family.

This is Elongation factor P-like protein from Vibrio atlanticus (strain LGP32) (Vibrio splendidus (strain Mel32)).